A 417-amino-acid chain; its full sequence is Serine hydroxymethyltransferase (417 aa).

(6S)-5,6,7,8-tetrahydrofolate is bound by residues Leu-122 and 126–128; that span reads GHL. Lys-231 bears the N6-(pyridoxal phosphate)lysine mark.

This sequence belongs to the SHMT family. Homodimer. Pyridoxal 5'-phosphate serves as cofactor.

The protein resides in the cytoplasm. The enzyme catalyses (6R)-5,10-methylene-5,6,7,8-tetrahydrofolate + glycine + H2O = (6S)-5,6,7,8-tetrahydrofolate + L-serine. Its pathway is one-carbon metabolism; tetrahydrofolate interconversion. The protein operates within amino-acid biosynthesis; glycine biosynthesis; glycine from L-serine: step 1/1. Functionally, catalyzes the reversible interconversion of serine and glycine with tetrahydrofolate (THF) serving as the one-carbon carrier. This reaction serves as the major source of one-carbon groups required for the biosynthesis of purines, thymidylate, methionine, and other important biomolecules. Also exhibits THF-independent aldolase activity toward beta-hydroxyamino acids, producing glycine and aldehydes, via a retro-aldol mechanism. This is Serine hydroxymethyltransferase from Caldicellulosiruptor saccharolyticus (strain ATCC 43494 / DSM 8903 / Tp8T 6331).